Here is a 297-residue protein sequence, read N- to C-terminus: Protease HtpX homolog (297 aa).

A run of 2 helical transmembrane segments spans residues 14–34 and 39–59; these read VILL…AGYL and YQLG…SMIF. Zn(2+) is bound at residue histidine 143. Glutamate 144 is a catalytic residue. Residue histidine 147 participates in Zn(2+) binding. 2 helical membrane-spanning segments follow: residues 158–178 and 193–213; these read IAVA…RMMW and GFGA…PLAA. Glutamate 225 contacts Zn(2+).

The protein belongs to the peptidase M48B family. Requires Zn(2+) as cofactor.

The protein resides in the cell membrane. This chain is Protease HtpX homolog, found in Streptococcus equi subsp. zooepidemicus (strain MGCS10565).